The following is a 589-amino-acid chain: MSKTASSRNSLSAQLRRAANTRIEVEGNLALSIANDLLLAYGQSPFNSEAECISFSPRFDGTPDDFRINYLKAEIMSKYDDFSLGIDTEAVAWEKFLAAEAECALTNARLYRPDYSEDFNFSLGESCIHMARRKIAKLIGDVPSVEGMLRHCRFSGGATTTNNRSYGHPSFKFALPQACTPRALKYVLALRASTHFDIRISDISPFNKAVTVPKNSKTDRCIAIEPGWNMFFQLGIGGILRDRLRCWGIDLNDQTINQRRAHEGSVTNNLATVDLSAASDSISLALCELLLPPGWFEVLMDLRSPKGRLPDGSVVTYEKISSMGNGYTFELESLIFASLARSVCEILDLDSSEVTVYGDDIILPSCAVPALREVFKYVGFTTNTKKTFSEGPFRESCGKHYYSGVDVTPFYIRHRIVSPADLILVLNNLYRWATIDGVWDPRAHSVYLKYRKLLPKQLQRNTIPDGYGDGALVGSVLINPFAKNRGWIRYVPVITDHTRDRERAELGSYLYDLFSRCLSESNDGLPLRGPSGCDSADLFAIDQLICRSNPTKISRSTGKFDIQYIACSSRVLAPYGVFQGTKVASLHEA.

Positions 259–391 (RRAHEGSVTN…TNTKKTFSEG (133 aa)) constitute a RdRp catalytic domain. Residues D274, D359, and D360 each contribute to the Mg(2+) site.

Homodimer; the replicase complex can dimerize. Part of the viral RNA-dependent RNA polymerase complex, the other subunits are the host ribosomal protein S1, EF-Tu and EF-Ts. S1 is needed for the initiation of genomic RNA (+)-strand replication. Mg(2+) is required as a cofactor.

It catalyses the reaction RNA(n) + a ribonucleoside 5'-triphosphate = RNA(n+1) + diphosphate. In terms of biological role, this is the catalytic subunit of the viral RNA-dependent RNA polymerase complex. This complex is involved in viral RNA replication that produces (+)-stranded genomes via a complementary, (-)-stranded intermediate. Binds RNA cooperatively with the host ribosomal protein S1. This is RNA-directed RNA polymerase subunit beta from Escherichia coli (Bacteriophage Q-beta).